Consider the following 429-residue polypeptide: MAMNFVTFNQDYSYLAVATSKGFRIFTTDPFAKSYETKEGNIAIIEMLFSTSLVALILSPRRLQITNTKRQSTICELTFPTTVLAVKLNRKRLVIVLEDQIYLYDIQTMKLLYTIQTSPNPNAICALSPSSDNCYLAYPLPQKAPPSSFNPPSHTPPGSTHVSPTSGEVLIFDTLKLEAINVIEAHRSPLACITLNSDGTLLATASDKGTIIRVFSVPDGHKLYQFRRGSMPSRIFSMSFNTTSTLLCVSSSTETIHLFKLSHPTSSPDASPSSPVGRDRSLSQSSSGYSPDRGDLTGDVGSSDFPARKHNGTLMGMIRRTSQNVGSTVAAKVGGYLPKGVSEMWEPTRDFAWFKLPKPNQTSGGSVNNGPLRSVVAMSSNTPQVMVVTSDGNFYVFSIDLSKGGEGTLTKQYSVLESNDRLGYSVTDY.

WD repeat units lie at residues 1–36 (MAMN…KSYE), 69–114 (KRQS…LLYT), 139–182 (PLPQ…AINV), 185–225 (AHRS…KLYQ), 230–269 (SMPS…SSPD), 309–355 (KHNG…AWFK), and 367–407 (VNNG…GGEG). Residues 226-230 (FRRGS) carry the L/FRRG motif motif. Over residues 262 to 275 (SHPTSSPDASPSSP) the composition is skewed to low complexity. Positions 262 to 308 (SHPTSSPDASPSSPVGRDRSLSQSSSGYSPDRGDLTGDVGSSDFPAR) are disordered.

It belongs to the WD repeat PROPPIN family. Component of the PI(3,5)P2 regulatory complex.

It is found in the preautophagosomal structure membrane. Its subcellular location is the vacuole membrane. It localises to the endosome membrane. The PI(3,5)P2 regulatory complex regulates both the synthesis and turnover of phosphatidylinositol 3,5-bisphosphate (PtdIns(3,5)P2). Necessary for proper vacuole morphology. Plays an important role in osmotically-induced vacuole fragmentation. Required for cytoplasm to vacuole transport (Cvt) vesicle formation, pexophagy and starvation-induced autophagy. Involved in correct atg9 trafficking to the pre-autophagosomal structure. Might also be involved in premeiotic DNA replication. The protein is Autophagy-related protein 18 (atg18) of Neosartorya fischeri (strain ATCC 1020 / DSM 3700 / CBS 544.65 / FGSC A1164 / JCM 1740 / NRRL 181 / WB 181) (Aspergillus fischerianus).